Here is a 62-residue protein sequence, read N- to C-terminus: Overexpressed in colon carcinoma 1 protein homolog (62 aa).

The segment covering 1–16 has biased composition (gly residues); that stretch reads MGCGNSTAGGAGGRGA. Residues 1–62 are disordered; it reads MGCGNSTAGG…SGQTKAAPKD (62 aa).

It belongs to the OCC1 family.

This Gallus gallus (Chicken) protein is Overexpressed in colon carcinoma 1 protein homolog.